The chain runs to 959 residues: Bifunctional premutilin synthase (959 aa).

The tract at residues Met1–Asp542 is class II diterpene cyclase. The DXDD motif motif lies at Asp309–Met312. Asp311 acts as the For class II diterpene cyclase activity in catalysis. The class I diterpene synthase stretch occupies residues Pro543 to His959. The For class I diterpene synthase activity role is filled by Asp649. Residues Asp649, Asp653, and Asn824 each contribute to the Mg(2+) site. Positions Asp649 to Asp653 match the DDXXD motif motif. The disordered stretch occupies residues Lys931 to His959. A compositionally biased stretch (low complexity) spans Asn934 to His959.

This sequence belongs to the terpene synthase family. The cofactor is Mg(2+).

It functions in the pathway secondary metabolite biosynthesis; terpenoid biosynthesis. Bifunctional premutilin synthase; part of the gene cluster that mediates the biosynthesis of pleuromutilin, a tricyclic diterpene showing antibacterial properties. The geranylgeranyl diphosphate (GGPP) synthase ple4 catalyzes the first step in pleuromutilin biosynthesis. GGPP is then substrate of the premutilin synthase (PS) ple3 to yield premutilin. Premutilin synthase is a bifunctional enzyme composed of the fusion of a class II diterpene cyclase (DTC) and a class I diterpene synthase (DTS), with the corresponding domains and active sites containing characteristic aspartate-rich motifs. GGPP is first converted to mutildienyl-diphosphate (MPP) at the class II DTC site. MPP is subsequently further cyclized at the class I DTS site, followed by a 1,5-hydride shift and addition of water prior to terminating deprotonation, to yield premutilin. The cytochrome P450 monooxygenases ple5 and ple6 hydroxylate premutilin at C-11 and C-3, respectively, producing 11-hydroxypremutilin and 3-hydroxypremutilin. The combination of the actions of both ple5 and ple6 leads to the production of 3,11-dihydroxypremutilin. The short chain dehydrogenase ple7 further converts 3,11-dihydroxypremutilin into mutilin. The acetyltransferase ple2 then acetylates mutilin to produce 14-O-acetylmutilin. Finally, the cytochrome P450 monooxygenase ple1 catalyzes hydroxylation on the alpha position of the acetyl side chain of 14-O-acetylmutilin to yield pleuromutilin. This is Bifunctional premutilin synthase from Rhodocybe pseudopiperita (Clitopilus pseudopiperitus).